A 639-amino-acid polypeptide reads, in one-letter code: MAKIIGIDLGTTNSVVAVMEGGEPKVIANEEGGRTTPSVVGFTKSGERLVGQVAKRQAITNPENTIYSIKRFMGRRQNEVNDEMKMVPYKVKQQGDHIVVEAQGKDYTAPEVSAMILQKLKKAAEDYLGTSVTEAVITVPAYFNDAQRQATKDAGKIAGLDVKRIVNEPTAAALAYGLDKKKDETIAVYDFGGGTFDISILEVGEGVIEVKSTNGDTHLGGDNLDQKIVDWLIDEFKKDEGLDLRAKGNEMALQRLKDAAERAKIELSTALETEINLPFITADATGPKHLVKKLTRAKLEQLVEDILQRSIEPCKKAMADAGVDASKIDEVVLVGGQTRMPRIQEIVKQLFGKEPHRGVNPDEVVAIGAAVQAGVLAGEVKDLLLLDVTPLTLSIETLGGVATPMIPRNTTIPTKKTETFSTAGDSQTEVEVHVLQGERPMAGQNRTLGKFKLSGIPPAPRGVPQIEVTFDIDANGILNVTAKDTATGKDQKITITSSSGLSKEEVERMAKEAEAHSAEDKAKRDEIEARNQLDNLVYNIEKMLKENGDKVSGEEKAEVETALADAKKTLEGTPTAEELNAAREKLTASSHKLAEAMYKANAAAGAAPAGEPAPGEPQAEQKKDDGVIDAEYVDVDEKK.

A Phosphothreonine; by autocatalysis modification is found at T195. Over residues 601-618 (NAAAGAAPAGEPAPGEPQ) the composition is skewed to low complexity. The disordered stretch occupies residues 601–639 (NAAAGAAPAGEPAPGEPQAEQKKDDGVIDAEYVDVDEKK). Over residues 627–639 (VIDAEYVDVDEKK) the composition is skewed to acidic residues.

It belongs to the heat shock protein 70 family.

In terms of biological role, acts as a chaperone. The chain is Chaperone protein DnaK from Acidobacterium capsulatum (strain ATCC 51196 / DSM 11244 / BCRC 80197 / JCM 7670 / NBRC 15755 / NCIMB 13165 / 161).